The following is a 385-amino-acid chain: Acetate kinase (385 aa).

Mg(2+) is bound at residue Asn-9. Lys-16 is a binding site for ATP. Position 75 (Arg-75) interacts with substrate. Asp-132 acts as the Proton donor/acceptor in catalysis. Residues 192 to 196 (HLGNG), 266 to 268 (DFR), and 314 to 318 (GIGEN) contribute to the ATP site. A Mg(2+)-binding site is contributed by Glu-368.

It belongs to the acetokinase family. Homodimer. The cofactor is Mg(2+). Mn(2+) serves as cofactor.

Its subcellular location is the cytoplasm. The catalysed reaction is acetate + ATP = acetyl phosphate + ADP. The protein operates within metabolic intermediate biosynthesis; acetyl-CoA biosynthesis; acetyl-CoA from acetate: step 1/2. Its function is as follows. Catalyzes the formation of acetyl phosphate from acetate and ATP. Can also catalyze the reverse reaction. The protein is Acetate kinase of Mycobacterium bovis (strain ATCC BAA-935 / AF2122/97).